The primary structure comprises 354 residues: Transcription factor HHO2 (354 aa).

A compositionally biased stretch (acidic residues) spans 93–102; the sequence is VQEEEEEDGE. The tract at residues 93 to 112 is disordered; it reads VQEEEEEDGEHESSPELVNN. Positions 103–112 are enriched in basic and acidic residues; the sequence is HESSPELVNN. Residues 212-272 form the HTH myb-type domain; that stretch reads THRKQRRCWS…HLQKYRLHTR (61 aa). The segment at residues 243–268 is a DNA-binding region (H-T-H motif); it reads PKQIRDHMKVDGLTNDEVKSHLQKYR. Residues 324 to 354 are disordered; the sequence is VAQSPKRSLERSCNSPAASSSTNTNTSTPVS. The span at 337 to 354 shows a compositional bias: low complexity; the sequence is NSPAASSSTNTNTSTPVS.

The protein localises to the nucleus. Its function is as follows. Probable transcription factor involved in phosphate homeostasis. Involved in the regulation of the developmental response of lateral roots, acquisition and/or mobilization of phosphate and expression of a subset of genes involved in phosphate sensing and signaling pathway. Is a target of the transcription factor PHR1. This chain is Transcription factor HHO2, found in Arabidopsis thaliana (Mouse-ear cress).